We begin with the raw amino-acid sequence, 348 residues long: Major outer membrane protein P.IB (348 aa).

The signal sequence occupies residues 1-19 (MKKSLIALTLAALPVAAMA).

It belongs to the Gram-negative porin family. Homotrimer.

The protein resides in the cell outer membrane. Its function is as follows. Serves as a slightly cation selective porin. Major antigen on the gonococcal cell surface and it may have pathogenic properties in addition to its porin activity. The protein is Major outer membrane protein P.IB (porB) of Neisseria gonorrhoeae.